The sequence spans 218 residues: tRNA (guanine-N(7)-)-methyltransferase (218 aa).

The interval Met1–Asn25 is disordered. The segment covering Val13–Asn25 has biased composition (basic and acidic residues). S-adenosyl-L-methionine contacts are provided by Glu45, Glu70, Asp97, and Asp119. Asp119 is a catalytic residue. Position 123 (Lys123) interacts with substrate. The interaction with RNA stretch occupies residues Arg125–Arg130. Substrate is bound by residues Asp155 and Thr195–Glu198.

It belongs to the class I-like SAM-binding methyltransferase superfamily. TrmB family.

It catalyses the reaction guanosine(46) in tRNA + S-adenosyl-L-methionine = N(7)-methylguanosine(46) in tRNA + S-adenosyl-L-homocysteine. Its pathway is tRNA modification; N(7)-methylguanine-tRNA biosynthesis. In terms of biological role, catalyzes the formation of N(7)-methylguanine at position 46 (m7G46) in tRNA. In Lactobacillus delbrueckii subsp. bulgaricus (strain ATCC BAA-365 / Lb-18), this protein is tRNA (guanine-N(7)-)-methyltransferase.